Reading from the N-terminus, the 471-residue chain is ATP synthase subunit beta (471 aa).

An ATP-binding site is contributed by 154 to 161; it reads GGAGVGKT.

This sequence belongs to the ATPase alpha/beta chains family. F-type ATPases have 2 components, CF(1) - the catalytic core - and CF(0) - the membrane proton channel. CF(1) has five subunits: alpha(3), beta(3), gamma(1), delta(1), epsilon(1). CF(0) has three main subunits: a(1), b(2) and c(9-12). The alpha and beta chains form an alternating ring which encloses part of the gamma chain. CF(1) is attached to CF(0) by a central stalk formed by the gamma and epsilon chains, while a peripheral stalk is formed by the delta and b chains.

Its subcellular location is the cell membrane. The catalysed reaction is ATP + H2O + 4 H(+)(in) = ADP + phosphate + 5 H(+)(out). Produces ATP from ADP in the presence of a proton gradient across the membrane. The catalytic sites are hosted primarily by the beta subunits. The polypeptide is ATP synthase subunit beta (Mesomycoplasma hyopneumoniae (strain 7448) (Mycoplasma hyopneumoniae)).